The following is a 1543-amino-acid chain: MNKMALASFMKGRTVIGTPDEETMDIELPKKYHEMVGVIFSDTFSYRLKFNWGYRIPVIKEHSEYTEHCWAMHGEIFCYLAKYWLKGFVAFQAAINAAIIEVTTNHSVMEELTSVIGINMKIPPFISKGEIMNEWFHFTCLVSFSSFIYFASLNVARERGKFKKLMTVMGLRESAFWLSWGLTYICFIFIMSIFMALVITSIPIVFHTGFMVIFTLYSLYGLSLIALAFLMSVLIRKPMLAGLAGFLFTVFWGCLGFTVLYRQLPLSLGWVLSLLSPFAFTAGMAQITHLDNYLSGVIFPDPSGDSYKMIATFFILAFDTLFYLIFTLYFERVLPDKDGHGDSPLFFLKSSFWSKHQNTHHEIFENEINPEHSSDDSFEPVSPEFHGKEAIRIRNVIKEYNGKTGKVEALQGIFFDIYEGQITAILGHNGAGKSTLLNILSGLSVSTEGSATIYNTQLSEITDMEEIRKNIGFCPQFNFQFDFLTVRENLRVFAKIKGIQPKEVEQEVKRIIMELDMQSIQDIIAKKLSGGQKRKLTLGIAILGDPQVLLLDEPTAGLDPFSRHRVWSLLKEHKVDRLILFSTQFMDEADILADRKVFLSNGKLKCAGSSLFLKRKWGIGYHLSLHRNEMCDTEKITSLIKQHIPDAKLTTESEEKLVYSLPLEKTNKFPDLYSDLDKCSDQGIRNYAVSVTSLNEVFLNLEGKSAIDEPDFDIGKQEKIHVTRNTGDESEMEQVLCSLPETRKAVSSAALWRRQIYAVATLRFLKLRRERRALLCLLLVLGIAFIPIILEKIMYKVTRETHCWEFSPSMYFLSLEQIPKTPLTSLLIVNNTGSNIEDLVHSLKCQDIVLEIDDFRNRNGSDDPSYNGAIIVSGDQKDYRFSVACNTKKLNCFPVLMGIVSNALMGIFNFTELIQMESTSFSRDDIVLDLGFIDGSIFLLLITNCVSPFIGMSSISDYKKNVQSQLWISGLWPSAYWCGQALVDIPLYFLILFSIHLIYYFIFLGFQLSWELMFVLVVCIIGCAVSLIFLTYVLSFIFRKWRKNNGFWSFGFFIILICVSTIMVSTQYEKLNLILCMIFIPSFTLLGYVMLLIQLDFMRNLDSLDNRINEVNKTILLTTLIPYLQSVIFLFVIRCLEMKYGNEIMNKDPVFRISPRSRETHPNPEEPEEEDEDVQAERVQAANALTAPNLEEEPVITASCLHKEYYETKKSCFSTRKKKIAIRNVSFCVKKGEVLGLLGHNGAGKSTSIKMITGCTKPTAGVVVLQGSRASVRQQHDNSLKFLGYCPQENSLWPKLTMKEHLELYAAVKGLGKEDAALSISRLVEALKLQEQLKAPVKTLSEGIKRKLCFVLSILGNPSVVLLDEPFTGMDPEGQQQMWQILQATVKNKERGTLLTTHYMSEAEAVCDRMAMMVSGTLRCIGSIQHLKNKFGRDYLLEIKMKEPTQVEALHTEILKLFPQAAWQERYSSLMAYKLPVEDVHPLSRAFFKLEAMKQTFNLEEYSLSQATLEQVFLELCKEQELGNVDDKIDTTVEWKLLPQEDP.

Helical transmembrane passes span tyrosine 83–threonine 103, tryptophan 135–valine 155, isoleucine 185–valine 205, phenylalanine 210–leucine 230, leucine 240–leucine 260, leucine 264–methionine 284, and isoleucine 310–phenylalanine 330. One can recognise an ABC transporter 1 domain in the interval isoleucine 391–histidine 626. Glycine 427–serine 434 contacts ATP. 8 helical membrane passes run leucine 774–methionine 794, leucine 890–phenylalanine 910, isoleucine 926–valine 946, isoleucine 985–glycine 1005, phenylalanine 1014–leucine 1034, glycine 1046–threonine 1066, leucine 1073–isoleucine 1093, and lysine 1113–isoleucine 1133. Basic and acidic residues predominate over residues isoleucine 1153–proline 1164. Residues isoleucine 1153–glutamate 1177 are disordered. Residues glutamate 1165 to valine 1174 show a composition bias toward acidic residues. One can recognise an ABC transporter 2 domain in the interval tyrosine 1206–lysine 1440. ATP is bound at residue glycine 1239–serine 1246.

This sequence belongs to the ABC transporter superfamily. ABCA family. Widely expressed. Highly expressed in skeletal muscle, heart, brain and gastrointestinal tract.

It is found in the membrane. Probable transporter which may play a role in macrophage lipid transport and homeostasis. This chain is ATP-binding cassette sub-family A member 10 (ABCA10), found in Homo sapiens (Human).